A 58-amino-acid polypeptide reads, in one-letter code: MELVKCQPGICNCSCKPESLIPTTTSTSTTTTSTTTSTTTSTTTTTTTTTTKDFNTET.

The segment covering 23–51 (TTTSTSTTTTSTTTSTTTSTTTTTTTTTT) has biased composition (low complexity). A disordered region spans residues 23-58 (TTTSTSTTTTSTTTSTTTSTTTTTTTTTTKDFNTET).

This is an uncharacterized protein from Dictyostelium discoideum (Social amoeba).